The chain runs to 324 residues: GTPase Era (324 aa).

Residues 31 to 199 (KSGFIGIIGR…QELLVEHLEH (169 aa)) enclose the Era-type G domain. The interval 39–46 (GRPNVGKS) is G1. Residue 39–46 (GRPNVGKS) coordinates GTP. The G2 stretch occupies residues 65-69 (QTTRN). A G3 region spans residues 86-89 (DTPG). GTP is bound by residues 86 to 90 (DTPGI) and 148 to 151 (NKVD). A G4 region spans residues 148–151 (NKVD). Residues 178 to 180 (FSA) form a G5 region. The KH type-2 domain occupies 230-306 (TREEVPHSVA…YLELFVKVQP (77 aa)).

The protein belongs to the TRAFAC class TrmE-Era-EngA-EngB-Septin-like GTPase superfamily. Era GTPase family. Monomer.

The protein localises to the cytoplasm. It is found in the cell inner membrane. Its function is as follows. An essential GTPase that binds both GDP and GTP, with rapid nucleotide exchange. Plays a role in 16S rRNA processing and 30S ribosomal subunit biogenesis and possibly also in cell cycle regulation and energy metabolism. This is GTPase Era from Nostoc sp. (strain PCC 7120 / SAG 25.82 / UTEX 2576).